A 263-amino-acid polypeptide reads, in one-letter code: Shikimate dehydrogenase (NADP(+)) (263 aa).

Shikimate is bound by residues 16–18 (SKS) and Thr65. Lys69 functions as the Proton acceptor in the catalytic mechanism. The shikimate site is built by Asn90 and Asp105. NADP(+) contacts are provided by residues 125-129 (GSGGS) and Leu208. Shikimate is bound at residue Tyr210. Gly230 contributes to the NADP(+) binding site.

This sequence belongs to the shikimate dehydrogenase family. In terms of assembly, homodimer.

It catalyses the reaction shikimate + NADP(+) = 3-dehydroshikimate + NADPH + H(+). It functions in the pathway metabolic intermediate biosynthesis; chorismate biosynthesis; chorismate from D-erythrose 4-phosphate and phosphoenolpyruvate: step 4/7. Inhibited by curcumin, 3-(2-naphthyloxy)-4-oxo-2-(trifluoromethyl)-4H-chromen-7-yl 3-chlorobenzoate, butyl 2-{[3-(2-naphthyloxy)-4-oxo-2-(trifluoromethyl)-4H-chromen-7-yl]oxy}propanoate, 2-({2-[(2-{[2-(2,3-dimethylanilino)-2-oxoethyl]sulfanyl}-1,3-benzothiazol-6-yl)amino]-2-oxoethyl}sulfanyl)-N-(2-naphthyl)acetamide, and maesaquinone diacetate. Its function is as follows. Involved in the biosynthesis of the chorismate, which leads to the biosynthesis of aromatic amino acids. Catalyzes the reversible NADPH linked reduction of 3-dehydroshikimate (DHSA) to yield shikimate (SA). It can also use NAD to oxidize shikimate. The protein is Shikimate dehydrogenase (NADP(+)) of Helicobacter pylori (Campylobacter pylori).